A 349-amino-acid polypeptide reads, in one-letter code: ATP phosphoribosyltransferase regulatory subunit (349 aa).

A disordered region spans residues 327–349 (GRGRGVRPRRASARGGRARARPR). A compositionally biased stretch (basic residues) spans 330–349 (RGVRPRRASARGGRARARPR).

It belongs to the class-II aminoacyl-tRNA synthetase family. HisZ subfamily. In terms of assembly, heteromultimer composed of HisG and HisZ subunits.

The protein localises to the cytoplasm. The protein operates within amino-acid biosynthesis; L-histidine biosynthesis; L-histidine from 5-phospho-alpha-D-ribose 1-diphosphate: step 1/9. Its function is as follows. Required for the first step of histidine biosynthesis. May allow the feedback regulation of ATP phosphoribosyltransferase activity by histidine. In Anaeromyxobacter sp. (strain K), this protein is ATP phosphoribosyltransferase regulatory subunit.